Reading from the N-terminus, the 184-residue chain is Ribosome-recycling factor (184 aa).

This sequence belongs to the RRF family.

The protein resides in the cytoplasm. Functionally, responsible for the release of ribosomes from messenger RNA at the termination of protein biosynthesis. May increase the efficiency of translation by recycling ribosomes from one round of translation to another. This is Ribosome-recycling factor from Oleidesulfovibrio alaskensis (strain ATCC BAA-1058 / DSM 17464 / G20) (Desulfovibrio alaskensis).